The sequence spans 724 residues: Putative methyltransferase NSUN7 (724 aa).

Cys-444 serves as the catalytic Nucleophile. 3 disordered regions span residues Lys-542 to Asp-574, Ile-595 to Val-629, and Thr-698 to Leu-724. The segment covering Thr-543–Lys-554 has biased composition (basic residues). A compositionally biased stretch (basic and acidic residues) spans His-562–Ala-572. Over residues Ile-595–Arg-618 the composition is skewed to polar residues.

It belongs to the class I-like SAM-binding methyltransferase superfamily. RsmB/NOP family. In terms of tissue distribution, expressed in testis.

Functionally, may have S-adenosyl-L-methionine-dependent methyl-transferase activity. This chain is Putative methyltransferase NSUN7 (Nsun7), found in Mus musculus (Mouse).